A 393-amino-acid polypeptide reads, in one-letter code: Phosphoglycerate kinase (393 aa).

Substrate contacts are provided by residues 22-24 (DFN), arginine 37, 60-63 (HLGR), arginine 119, and arginine 152. ATP-binding positions include lysine 202, glycine 293, glutamate 324, and 350–353 (GGDS).

The protein belongs to the phosphoglycerate kinase family. As to quaternary structure, monomer.

It is found in the cytoplasm. The catalysed reaction is (2R)-3-phosphoglycerate + ATP = (2R)-3-phospho-glyceroyl phosphate + ADP. It participates in carbohydrate degradation; glycolysis; pyruvate from D-glyceraldehyde 3-phosphate: step 2/5. The polypeptide is Phosphoglycerate kinase (Borrelia garinii subsp. bavariensis (strain ATCC BAA-2496 / DSM 23469 / PBi) (Borreliella bavariensis)).